Here is a 202-residue protein sequence, read N- to C-terminus: Snake venom metalloproteinase leucurolysin-A (202 aa).

Glutamine 1 is modified (pyrrolidone carboxylic acid). The 197-residue stretch at 6 to 202 folds into the Peptidase M12B domain; sequence RYIELVVVAD…HNPQCILNKP (197 aa). Residues glutamate 9 and aspartate 93 each coordinate Ca(2+). 3 disulfide bridges follow: cysteine 117/cysteine 197, cysteine 157/cysteine 181, and cysteine 159/cysteine 164. Histidine 142 lines the Zn(2+) pocket. Glutamate 143 is an active-site residue. Residues histidine 146 and histidine 152 each coordinate Zn(2+). Ca(2+) contacts are provided by cysteine 197 and asparagine 200.

It belongs to the venom metalloproteinase (M12B) family. P-I subfamily. In terms of assembly, monomer. Requires Zn(2+) as cofactor. Expressed by the venom gland.

The protein resides in the secreted. Its activity is regulated as follows. Inhibited by EDTA and 2-mercaptoethanol. Inhibited by 1 mM zinc ion and to a lesser extent by 1 mM calcium ion. Its function is as follows. Non-hemorrhagic metalloproteinase that hydrolyzes the alpha chains of fibrinogen, as well as fibrin, fibronectin and casein. Beta and gamma chains are also hydrolyzed, but more slowly. Thrombolytic activity is also observed. Induces detachment of endothelial cells followed by death, and inhibits endothelial cell adhesion to fibronectin. Induces edema in mouse paw. Inhibits ADP-induced platelet aggregation on human platelet-rich plasma with an IC(50) of 2.8 uM. The protein is Snake venom metalloproteinase leucurolysin-A of Bothrops leucurus (Whitetail lancehead).